The primary structure comprises 806 residues: Mitogen-activated protein kinase 7 (806 aa).

The disordered stretch occupies residues 1–23 (MAEPLKEEDGEDGSGEPPGRVKA). Residue Ala-2 is modified to N-acetylalanine. Positions 2–77 (AEPLKEEDGE…VVSSARRRLT (76 aa)) are required for cytoplasmic targeting. The Protein kinase domain maps to 55–347 (YEIIETIGNG…AAAALRHPFL (293 aa)). Residues 61–69 (IGNGAYGVV) and Lys-84 each bind ATP. The tract at residues 78–139 (GQQVAIKKIP…FRSVYVVLDL (62 aa)) is required for binding to MAP2K5. Residues 140-406 (MESDLHQIIH…QQIRFQPSLQ (267 aa)) form a necessary for oligomerization region. Asp-182 (proton acceptor) is an active-site residue. The short motif at 219 to 221 (TEY) is the TXY element. The may not be required for kinase activity; required to stimulate MEF2C activity stretch occupies residues 407-806 (PVASEPVCPD…LSDLPDLQEP (400 aa)). Disordered stretches follow at residues 424-473 (APSG…AISD) and 488-727 (RSRL…PKGS). Positions 433–443 (SPPPALPPCSD) are enriched in pro residues. Composition is skewed to basic and acidic residues over residues 502-519 (PEPRKPVTAQERQREREE), 527-544 (RAKEREKRRQERERKERG), and 563-573 (DNDRSLLERWT). Positions 505–539 (RKPVTAQERQREREEKRRRRQERAKEREKRRQERE) match the Nuclear localization signal motif. Residues 578–592 (PPAPAPAPAPAPAPA) show a composition bias toward pro residues. Residues 593 to 603 (PSSAQPTSTPT) are compositionally biased toward low complexity. Pro residues predominate over residues 627–643 (VCPPPGPVPQPAGPIPA). The segment covering 647 to 660 (TAPSTSLLASQSLV) has biased composition (polar residues). Positions 678–689 (PSGPPPPDPGLT) are enriched in pro residues. Polar residues predominate over residues 693–710 (STSESPDVNLVTQQLSKS). A Phosphoserine modification is found at Ser-710. Residue Thr-723 is modified to Phosphothreonine.

This sequence belongs to the protein kinase superfamily. CMGC Ser/Thr protein kinase family. MAP kinase subfamily. Interacts with MAP2K5. Forms oligomers. Interacts with MEF2A, MEF2C and MEF2D; the interaction phosphorylates the MEF2s and enhances transcriptional activity of MEF2A, MEF2C but not MEF2D. Interacts with SGK1. Interacts with PML. Interacts (via N-terminal half) with HSP90AB1-CDC37 chaperone complex in resting cells; the interaction is MAP2K5-independent and prevents MAPK7 from ubiquitination and proteasomal degradation. Interacts with STUB1/CHIP; the interaction is enhanced in the presence of IGF1 or MAP2K5 and promotes STUB1/CHIP E3 ligase activity. Mg(2+) serves as cofactor. Post-translationally, dually phosphorylated on Thr-219 and Tyr-221, which activates the enzyme. As to expression, detected in testis, brain, kidney, lung and heart. Detected in total embryo (at protein level).

Its subcellular location is the cytoplasm. It is found in the nucleus. The protein localises to the PML body. The catalysed reaction is L-seryl-[protein] + ATP = O-phospho-L-seryl-[protein] + ADP + H(+). It catalyses the reaction L-threonyl-[protein] + ATP = O-phospho-L-threonyl-[protein] + ADP + H(+). Its activity is regulated as follows. Activated by tyrosine and threonine phosphorylation. Activated in response to hyperosmolarity, hydrogen peroxide, and epidermal growth factor (EGF). Its function is as follows. Plays a role in various cellular processes such as proliferation, differentiation and cell survival. The upstream activator of MAPK7 is the MAPK kinase MAP2K5. Upon activation, it translocates to the nucleus and phosphorylates various downstream targets including MEF2C. EGF activates MAPK7 through a Ras-independent and MAP2K5-dependent pathway. As part of the MAPK/ERK signaling pathway, acts as a negative regulator of apoptosis in cardiomyocytes via interaction with STUB1/CHIP and promotion of STUB1-mediated ubiquitination and degradation of ICER-type isoforms of CREM. May have a role in muscle cell differentiation. May be important for endothelial function and maintenance of blood vessel integrity. MAP2K5 and MAPK7 interact specifically with one another and not with MEK1/ERK1 or MEK2/ERK2 pathways. Phosphorylates SGK1 at Ser-78 and this is required for growth factor-induced cell cycle progression. Involved in the regulation of p53/TP53 by disrupting the PML-MDM2 interaction. The sequence is that of Mitogen-activated protein kinase 7 (Mapk7) from Mus musculus (Mouse).